The chain runs to 242 residues: Uridylate kinase (242 aa).

16–19 contributes to the ATP binding site; the sequence is KISG. Residues 24–29 are involved in allosteric activation by GTP; sequence GDQGFG. Glycine 58 lines the UMP pocket. Positions 59 and 63 each coordinate ATP. Residues aspartate 78 and 139–146 each bind UMP; that span reads TGNPYFTT. ATP-binding residues include threonine 166, tyrosine 172, and aspartate 175.

Belongs to the UMP kinase family. As to quaternary structure, homohexamer.

It is found in the cytoplasm. The enzyme catalyses UMP + ATP = UDP + ADP. Its pathway is pyrimidine metabolism; CTP biosynthesis via de novo pathway; UDP from UMP (UMPK route): step 1/1. With respect to regulation, allosterically activated by GTP. Inhibited by UTP. Catalyzes the reversible phosphorylation of UMP to UDP. The protein is Uridylate kinase of Roseobacter denitrificans (strain ATCC 33942 / OCh 114) (Erythrobacter sp. (strain OCh 114)).